A 161-amino-acid polypeptide reads, in one-letter code: Regulator of ribonuclease activity A (161 aa).

This sequence belongs to the RraA family. In terms of assembly, homotrimer. Binds to both RNA-binding sites in the C-terminal region of Rne and to RhlB.

It is found in the cytoplasm. Functionally, globally modulates RNA abundance by binding to RNase E (Rne) and regulating its endonucleolytic activity. Can modulate Rne action in a substrate-dependent manner by altering the composition of the degradosome. Modulates RNA-binding and helicase activities of the degradosome. The sequence is that of Regulator of ribonuclease activity A from Salmonella agona (strain SL483).